The sequence spans 387 residues: EARP and GARP complex-interacting protein 1 (387 aa).

The residue at position 1 (methionine 1) is an N-acetylmethionine. WD repeat units follow at residues threonine 132–valine 172, glycine 180–cysteine 222, alanine 226–lysine 266, and glutamate 270–phenylalanine 310. The tract at residues phenylalanine 310–proline 334 is disordered. Residue serine 320 is modified to Phosphoserine. Residues glutamine 322–proline 334 are compositionally biased toward basic and acidic residues. The stretch at glutamate 345–isoleucine 385 is one WD 5 repeat.

Belongs to the WD repeat EIPR1 family. As to quaternary structure, interacts with two multisubunit tethering complexes: EARP composed of VPS50, VPS51, VPS52 and VPS53 subunits and GARP complex composed of VPS51, VPS52, VPS53 and VPS54 subunits. Interacts with SNAP29.

The protein localises to the golgi apparatus. The protein resides in the trans-Golgi network. Its function is as follows. Acts as a component of endosomal retrieval machinery that is involved in protein transport from early endosomes to either recycling endosomes or the trans-Golgi network. Mediates the recruitment of Golgi-associated retrograde protein (GARP) complex to the trans-Golgi network and controls early endosome-to-Golgi transport of internalized protein. Promotes the recycling of internalized transferrin receptor (TFRC) to the plasma membrane through interaction with endosome-associated recycling protein (EARP) complex. Controls proper insulin distribution and secretion, and retention of cargo in mature dense core vesicles. Required for the stability of the endosome-associated retrograde protein (EARP) complex subunits and for proper localization and association of EARP with membranes. This is EARP and GARP complex-interacting protein 1 from Macaca fascicularis (Crab-eating macaque).